The sequence spans 449 residues: CCA-adding enzyme (449 aa).

Residues S57 and R60 each coordinate ATP. 2 residues coordinate CTP: S57 and R60. The Mg(2+) site is built by D69, D71, and D124. Positions 147, 167, and 176 each coordinate ATP. H147, K167, and Y176 together coordinate CTP.

This sequence belongs to the tRNA nucleotidyltransferase/poly(A) polymerase family. Archaeal CCA-adding enzyme subfamily. In terms of assembly, homodimer. Mg(2+) serves as cofactor.

The enzyme catalyses a tRNA precursor + 2 CTP + ATP = a tRNA with a 3' CCA end + 3 diphosphate. The catalysed reaction is a tRNA with a 3' CCA end + 2 CTP + ATP = a tRNA with a 3' CCACCA end + 3 diphosphate. In terms of biological role, catalyzes the addition and repair of the essential 3'-terminal CCA sequence in tRNAs without using a nucleic acid template. Adds these three nucleotides in the order of C, C, and A to the tRNA nucleotide-73, using CTP and ATP as substrates and producing inorganic pyrophosphate. tRNA 3'-terminal CCA addition is required both for tRNA processing and repair. Also involved in tRNA surveillance by mediating tandem CCA addition to generate a CCACCA at the 3' terminus of unstable tRNAs. While stable tRNAs receive only 3'-terminal CCA, unstable tRNAs are marked with CCACCA and rapidly degraded. The protein is CCA-adding enzyme of Methanocaldococcus jannaschii (strain ATCC 43067 / DSM 2661 / JAL-1 / JCM 10045 / NBRC 100440) (Methanococcus jannaschii).